The chain runs to 528 residues: MAGSQLNVLVKLDQAKTQWYHFMAIVIAGMGFFTDAYDLFCIALVTKLLGRLYYTDITKPNPGTLPPNVSSAVTGVALCGTLAGQLFFGWLGDKLGRKSVYGFTLILMVVCSIASGLSFGHTPKSVIATLCFFRFWLGFGIGGDYPLSATIMSEYASKKTRGAFIAAVFAMQGFGILFGAIVALVVSAGFRHAYPAPSYAQNPAASLAPQADYTWRLILMFGTIPAGLTYYWRMKMPETARYTALVARNAKQAAADMSKVLHAEIEERPEVVESQVVAGETWGLFSRQFMKRHGMHLLATTSTWFLLDIAFYSQNLFQKDIFSKVGWIPPAKTMNALEELYRISRAQALIALCGTIPGYWFTVAFIDIVGRFWIQIMGFFMMTVFMLALGVPYDHWTHPAHHTGFVVLYALTFFFANFGPNSTTFIVPAEIFPARLRSTCHGISAASGKAGAIIGAFGFLYAAQDQHNPDAGYSRGIGIRNALFVLAGTNFLGMLMTLLVPESKGLSLEEMSKDNVVDETAQEAIAQA.

At 1–24 (MAGSQLNVLVKLDQAKTQWYHFMA) the chain is on the cytoplasmic side. A helical transmembrane segment spans residues 25–45 (IVIAGMGFFTDAYDLFCIALV). The Extracellular portion of the chain corresponds to 46 to 71 (TKLLGRLYYTDITKPNPGTLPPNVSS). A helical transmembrane segment spans residues 72–92 (AVTGVALCGTLAGQLFFGWLG). Residues 93–99 (DKLGRKS) are Cytoplasmic-facing. Residues 100–120 (VYGFTLILMVVCSIASGLSFG) traverse the membrane as a helical segment. Residues 121 to 125 (HTPKS) are Extracellular-facing. The chain crosses the membrane as a helical span at residues 126–146 (VIATLCFFRFWLGFGIGGDYP). The Cytoplasmic portion of the chain corresponds to 147 to 163 (LSATIMSEYASKKTRGA). Residues 164–184 (FIAAVFAMQGFGILFGAIVAL) form a helical membrane-spanning segment. Residues 185-212 (VVSAGFRHAYPAPSYAQNPAASLAPQAD) lie on the Extracellular side of the membrane. The chain crosses the membrane as a helical span at residues 213–232 (YTWRLILMFGTIPAGLTYYW). At 233–296 (RMKMPETARY…RQFMKRHGMH (64 aa)) the chain is on the cytoplasmic side. Residues 297–317 (LLATTSTWFLLDIAFYSQNLF) form a helical membrane-spanning segment. Residues 318-348 (QKDIFSKVGWIPPAKTMNALEELYRISRAQA) are Extracellular-facing. A helical membrane pass occupies residues 349–369 (LIALCGTIPGYWFTVAFIDIV). At 370-371 (GR) the chain is on the cytoplasmic side. The helical transmembrane segment at 372–392 (FWIQIMGFFMMTVFMLALGVP) threads the bilayer. Topologically, residues 393–405 (YDHWTHPAHHTGF) are extracellular. The chain crosses the membrane as a helical span at residues 406–426 (VVLYALTFFFANFGPNSTTFI). The Cytoplasmic portion of the chain corresponds to 427-442 (VPAEIFPARLRSTCHG). The chain crosses the membrane as a helical span at residues 443–463 (ISAASGKAGAIIGAFGFLYAA). Over 464–481 (QDQHNPDAGYSRGIGIRN) the chain is Extracellular. Residues 482–502 (ALFVLAGTNFLGMLMTLLVPE) traverse the membrane as a helical segment. Topologically, residues 503–528 (SKGLSLEEMSKDNVVDETAQEAIAQA) are cytoplasmic.

This sequence belongs to the major facilitator superfamily. Phosphate:H(+) symporter (TC 2.A.1.9) family. Expressed in the root stele and leaf phloem and xylem.

The protein localises to the membrane. Low-affinity transporter for inorganic phosphate (Pi). Involved in internal Pi transport from root to shoot. Responsible for most of the PHR2-mediated accumulation of excess shoot Pi under abundant Pi conditions, but not for PHO2-mediated accumulation of excess shoot Pi. Acts as a H(+):phosphate symporter. The protein is Inorganic phosphate transporter 1-2 (PTH1-2) of Oryza sativa subsp. japonica (Rice).